The following is a 67-amino-acid chain: Large ribosomal subunit protein bL31 (67 aa).

Zn(2+)-binding residues include Cys-16, Cys-18, Cys-37, and Cys-40.

Belongs to the bacterial ribosomal protein bL31 family. Type A subfamily. Part of the 50S ribosomal subunit. Requires Zn(2+) as cofactor.

In terms of biological role, binds the 23S rRNA. The sequence is that of Large ribosomal subunit protein bL31 from Methylococcus capsulatus (strain ATCC 33009 / NCIMB 11132 / Bath).